A 163-amino-acid polypeptide reads, in one-letter code: Shikimate kinase (163 aa).

Position 10–15 (10–15) interacts with ATP; sequence GVGKTT. A Mg(2+)-binding site is contributed by Thr-14. Residues Asp-28, Arg-52, and Gly-75 each contribute to the substrate site. An ATP-binding site is contributed by Arg-116. Arg-134 contributes to the substrate binding site. Arg-151 provides a ligand contact to ATP.

It belongs to the shikimate kinase family. Monomer. Mg(2+) serves as cofactor.

It is found in the cytoplasm. The catalysed reaction is shikimate + ATP = 3-phosphoshikimate + ADP + H(+). The protein operates within metabolic intermediate biosynthesis; chorismate biosynthesis; chorismate from D-erythrose 4-phosphate and phosphoenolpyruvate: step 5/7. Its function is as follows. Catalyzes the specific phosphorylation of the 3-hydroxyl group of shikimic acid using ATP as a cosubstrate. This is Shikimate kinase from Streptococcus pyogenes serotype M4 (strain MGAS10750).